Consider the following 271-residue polypeptide: MNRYQTMFKSLNQNKLGAFVPFITIGDPDPTTFIHIIDTLIQSGADALELGIPFSDPVSDGPSIQKSMERSFKSGANISSCLQLIKKIRNKYPTLPIGLLIYANLIFKNGIKNFYAHCSTLSIDSILIPDLPIEESSLFYNSAMYYQIAHIFICPTNASLDLIKKITDKGIGYIYLLSRSGITGINNTEFNKIKLNTLIYNIKQCNQKLPILQGFGIYSSEQARSSLLSGTSGIISGSCIANIIEENHPNIDLLLEKIRKFTHLMKIAMKL.

Residues Glu49 and Asp60 each act as proton acceptor in the active site.

The protein belongs to the TrpA family. Tetramer of two alpha and two beta chains.

The enzyme catalyses (1S,2R)-1-C-(indol-3-yl)glycerol 3-phosphate + L-serine = D-glyceraldehyde 3-phosphate + L-tryptophan + H2O. It functions in the pathway amino-acid biosynthesis; L-tryptophan biosynthesis; L-tryptophan from chorismate: step 5/5. In terms of biological role, the alpha subunit is responsible for the aldol cleavage of indoleglycerol phosphate to indole and glyceraldehyde 3-phosphate. This is Tryptophan synthase alpha chain from Blochmanniella floridana.